Consider the following 244-residue polypeptide: Sperm-egg fusion protein Juno (244 aa).

The N-terminal stretch at 1–19 is a signal peptide; the sequence is MAQWWQILLGLWAVLPTLA. 8 cysteine pairs are disulfide-bonded: Cys27-Cys55, Cys47-Cys95, Cys56-Cys99, Cys79-Cys166, Cys86-Cys137, Cys126-Cys200, Cys130-Cys180, and Cys143-Cys160. Residues 62–81 form an important for interaction with IZUMO1 region; that stretch reads WEAHLEEPLLFNFSMMHCGL. A glycan (N-linked (GlcNAc...) asparagine) is linked at Asn73. Residue Asn185 is glycosylated (N-linked (GlcNAc...) asparagine). Gly222 carries GPI-anchor amidated glycine lipidation. A propeptide spanning residues 223–244 is cleaved from the precursor; the sequence is SALAPQLSYTLPAFSLCLLFHP.

This sequence belongs to the folate receptor family. As to quaternary structure, monomer. Interacts with IZUMO1; the interaction is direct. IZUMO1 and IZUMO1R/JUNO form a complex with 1:1 stoichiometry. Interacts with WDR54. Post-translationally, the protein is rapidly cleaved following fertilization, being only weakly detectable in zona-intact fertilized eggs at telophase II and undetectable at the pronuclear stage. Sheding is probably required to block to polyspermy and ensuring egg fusion with a single sperm. As to expression, widely expressed with higher expression in thymus, spleen and lung. Present at the cell surface of unfertilized oocytes, while it is barely detectable 30 to 40 minutes after fertilization (at protein level).

The protein localises to the cell membrane. Its function is as follows. Receptor for IZUMO1 present at the cell surface of oocytes (oolemma), which is essential for species-specific gamete recognition and fertilization. The IZUMO1:IZUMO1R/JUNO interaction is a necessary adhesion event between sperm and egg that is required for fertilization but is not sufficient for cell fusion. The ligand-receptor interaction probably does not act as a membrane 'fusogen'. Does not bind folate. This is Sperm-egg fusion protein Juno from Mus musculus (Mouse).